The primary structure comprises 248 residues: Probable transcriptional regulatory protein MCA1220 (248 aa).

It belongs to the TACO1 family.

It is found in the cytoplasm. The polypeptide is Probable transcriptional regulatory protein MCA1220 (Methylococcus capsulatus (strain ATCC 33009 / NCIMB 11132 / Bath)).